The chain runs to 190 residues: ATP synthase subunit b 1 (190 aa).

A helical membrane pass occupies residues Asp35–Pro55.

The protein belongs to the ATPase B chain family. As to quaternary structure, F-type ATPases have 2 components, F(1) - the catalytic core - and F(0) - the membrane proton channel. F(1) has five subunits: alpha(3), beta(3), gamma(1), delta(1), epsilon(1). F(0) has three main subunits: a(1), b(2) and c(10-14). The alpha and beta chains form an alternating ring which encloses part of the gamma chain. F(1) is attached to F(0) by a central stalk formed by the gamma and epsilon chains, while a peripheral stalk is formed by the delta and b chains.

It is found in the cell inner membrane. F(1)F(0) ATP synthase produces ATP from ADP in the presence of a proton or sodium gradient. F-type ATPases consist of two structural domains, F(1) containing the extramembraneous catalytic core and F(0) containing the membrane proton channel, linked together by a central stalk and a peripheral stalk. During catalysis, ATP synthesis in the catalytic domain of F(1) is coupled via a rotary mechanism of the central stalk subunits to proton translocation. In terms of biological role, component of the F(0) channel, it forms part of the peripheral stalk, linking F(1) to F(0). The protein is ATP synthase subunit b 1 of Jannaschia sp. (strain CCS1).